Consider the following 476-residue polypeptide: Eukaryotic translation initiation factor 3 subunit L (476 aa).

The 196-residue stretch at 257-452 (DAIRMFSHIL…DLDYALEKDL (196 aa)) folds into the PCI domain.

The protein belongs to the eIF-3 subunit L family. In terms of assembly, component of the eukaryotic translation initiation factor 3 (eIF-3) complex.

It is found in the cytoplasm. In terms of biological role, component of the eukaryotic translation initiation factor 3 (eIF-3) complex, which is involved in protein synthesis of a specialized repertoire of mRNAs and, together with other initiation factors, stimulates binding of mRNA and methionyl-tRNAi to the 40S ribosome. The eIF-3 complex specifically targets and initiates translation of a subset of mRNAs involved in cell proliferation. The polypeptide is Eukaryotic translation initiation factor 3 subunit L (Emericella nidulans (strain FGSC A4 / ATCC 38163 / CBS 112.46 / NRRL 194 / M139) (Aspergillus nidulans)).